The following is a 445-amino-acid chain: Histidinol dehydrogenase (445 aa).

3 residues coordinate NAD(+): Tyr-144, Gln-205, and Asn-228. Ser-251, Gln-273, and His-276 together coordinate substrate. Zn(2+) is bound by residues Gln-273 and His-276. Catalysis depends on proton acceptor residues Glu-341 and His-342. The substrate site is built by His-342, Asp-375, Glu-429, and His-434. Residue Asp-375 participates in Zn(2+) binding. His-434 lines the Zn(2+) pocket.

Belongs to the histidinol dehydrogenase family. Zn(2+) serves as cofactor.

The enzyme catalyses L-histidinol + 2 NAD(+) + H2O = L-histidine + 2 NADH + 3 H(+). It functions in the pathway amino-acid biosynthesis; L-histidine biosynthesis; L-histidine from 5-phospho-alpha-D-ribose 1-diphosphate: step 9/9. Catalyzes the sequential NAD-dependent oxidations of L-histidinol to L-histidinaldehyde and then to L-histidine. The sequence is that of Histidinol dehydrogenase from Cupriavidus pinatubonensis (strain JMP 134 / LMG 1197) (Cupriavidus necator (strain JMP 134)).